Here is a 537-residue protein sequence, read N- to C-terminus: Copine-1 (537 aa).

C2 domains lie at 1–114 (MAHC…TLPL) and 123–245 (GRGT…ECIH). Asp21, Asp27, Asp80, Asp82, Asp92, Asp153, and Asp159 together coordinate Ca(2+). Position 171 is an N6-acetyllysine (Lys171). Residues Asp214, Asp216, and Asp222 each coordinate Ca(2+). One can recognise a VWFA domain in the interval 285–505 (NFTVGVDFTG…ALAQTVLAEV (221 aa)).

The protein belongs to the copine family. Homodimer; homodimerizes via its C2 domains. Interacts with p65/RELA (via N-terminus); this interaction induces proteolytic cleavage of p65/RELA subunit and inhibition of NF-kappa-B transcriptional activity. Interacts (via VWFA domain) with ACTB, CCDC22, MYCBP2, PPP5C, RDX and UBE2O. Ca(2+) is required as a cofactor. In terms of tissue distribution, expressed in liver, spleen, muscle, testis, adrenal (at protein level).

The protein resides in the nucleus. It is found in the cytoplasm. The protein localises to the cell membrane. Calcium-dependent phospholipid-binding protein that plays a role in calcium-mediated intracellular processes. Involved in the TNF-alpha receptor signaling pathway in a calcium-dependent manner. Exhibits calcium-dependent phospholipid binding properties. Plays a role in neuronal progenitor cell differentiation; induces neurite outgrowth via a AKT-dependent signaling cascade and calcium-independent manner. May recruit target proteins to the cell membrane in a calcium-dependent manner. May function in membrane trafficking. Involved in TNF-alpha-induced NF-kappa-B transcriptional repression by inducing endoprotease processing of the transcription factor NF-kappa-B p65/RELA subunit. Also induces endoprotease processing of NF-kappa-B p50/NFKB1, p52/NFKB2, RELB and REL. This chain is Copine-1, found in Bos taurus (Bovine).